We begin with the raw amino-acid sequence, 121 residues long: MNHAPHLYFAWQQLVDKSQLMLRLATEEQWDELIASEMAYVNAVQEIAHLTEEVAPSTTMQEQLRPMLRLILDNESKVKQLLQIRMDELAKLVGQSSVQKSVLSAYGDQGGFVLAPQDNLF.

The segment at 1–50 is required for homodimerization; that stretch reads MNHAPHLYFAWQQLVDKSQLMLRLATEEQWDELIASEMAYVNAVQEIAHL. The fliD binding stretch occupies residues 60–98; sequence MQEQLRPMLRLILDNESKVKQLLQIRMDELAKLVGQSSV.

The protein belongs to the FliT family. Homodimer. Interacts with FliD and FlhC.

Its subcellular location is the cytoplasm. The protein resides in the cytosol. Functionally, dual-function protein that regulates the transcription of class 2 flagellar operons and that also acts as an export chaperone for the filament-capping protein FliD. As a transcriptional regulator, acts as an anti-FlhDC factor; it directly binds FlhC, thus inhibiting the binding of the FlhC/FlhD complex to class 2 promoters, resulting in decreased expression of class 2 flagellar operons. As a chaperone, effects FliD transition to the membrane by preventing its premature polymerization, and by directing it to the export apparatus. The chain is Flagellar protein FliT from Shigella sonnei (strain Ss046).